The following is a 441-amino-acid chain: Ribulose bisphosphate carboxylase large chain (441 aa).

An N6,N6,N6-trimethyllysine modification is found at K5. Residues N114 and T164 each coordinate substrate. Residue K166 is the Proton acceptor of the active site. A substrate-binding site is contributed by K168. The Mg(2+) site is built by K192, D194, and E195. An N6-carboxylysine modification is found at K192. H285 serves as the catalytic Proton acceptor. Residues R286, H318, and S370 each coordinate substrate.

This sequence belongs to the RuBisCO large chain family. Type I subfamily. As to quaternary structure, heterohexadecamer of 8 large chains and 8 small chains; disulfide-linked. The disulfide link is formed within the large subunit homodimers. Mg(2+) is required as a cofactor. The disulfide bond which can form in the large chain dimeric partners within the hexadecamer appears to be associated with oxidative stress and protein turnover.

The protein resides in the plastid. The protein localises to the chloroplast. The catalysed reaction is 2 (2R)-3-phosphoglycerate + 2 H(+) = D-ribulose 1,5-bisphosphate + CO2 + H2O. The enzyme catalyses D-ribulose 1,5-bisphosphate + O2 = 2-phosphoglycolate + (2R)-3-phosphoglycerate + 2 H(+). Its function is as follows. RuBisCO catalyzes two reactions: the carboxylation of D-ribulose 1,5-bisphosphate, the primary event in carbon dioxide fixation, as well as the oxidative fragmentation of the pentose substrate in the photorespiration process. Both reactions occur simultaneously and in competition at the same active site. In Drosera petiolaris (Woolly sundew), this protein is Ribulose bisphosphate carboxylase large chain.